The sequence spans 272 residues: MSDMRLIVAGAGGRMGRTLIHALHEADGAALVGALEAPGSELLGQDSGLLAGLGPNGIPVSADLWSLSKDADGIIDFTVPAATIANVAIAAERGIVHVIGTTGLSASDNAVIKSVTSRAIVVQSGNMSLGVNLLAALVKQVAKSLDEDFDIEILEMHHRAKIDAPSGTAYLLGQAAADGRGVPLEEKSVRSRDGFTGARGRGDIGFATLRGGTVTGEHSVIFAGPYERIELTHRAEDRMIFARGAVKAACWARGRKPGLYSMADVLGLGSQS.

NAD(+) contacts are provided by residues 10-15 (GAGGRM), E36, 100-102 (GTT), and 124-127 (SGNM). H157 serves as the catalytic Proton donor/acceptor. (S)-2,3,4,5-tetrahydrodipicolinate is bound at residue H158. The active-site Proton donor is K161. 167–168 (GT) provides a ligand contact to (S)-2,3,4,5-tetrahydrodipicolinate.

Belongs to the DapB family.

It localises to the cytoplasm. It catalyses the reaction (S)-2,3,4,5-tetrahydrodipicolinate + NAD(+) + H2O = (2S,4S)-4-hydroxy-2,3,4,5-tetrahydrodipicolinate + NADH + H(+). The catalysed reaction is (S)-2,3,4,5-tetrahydrodipicolinate + NADP(+) + H2O = (2S,4S)-4-hydroxy-2,3,4,5-tetrahydrodipicolinate + NADPH + H(+). It participates in amino-acid biosynthesis; L-lysine biosynthesis via DAP pathway; (S)-tetrahydrodipicolinate from L-aspartate: step 4/4. Functionally, catalyzes the conversion of 4-hydroxy-tetrahydrodipicolinate (HTPA) to tetrahydrodipicolinate. The protein is 4-hydroxy-tetrahydrodipicolinate reductase of Afipia carboxidovorans (strain ATCC 49405 / DSM 1227 / KCTC 32145 / OM5) (Oligotropha carboxidovorans).